We begin with the raw amino-acid sequence, 318 residues long: tRNA U34 carboxymethyltransferase (318 aa).

Lysine 88, tryptophan 102, lysine 107, glycine 126, methionine 192, tyrosine 196, and arginine 311 together coordinate carboxy-S-adenosyl-L-methionine.

It belongs to the class I-like SAM-binding methyltransferase superfamily. CmoB family. As to quaternary structure, homotetramer.

It carries out the reaction carboxy-S-adenosyl-L-methionine + 5-hydroxyuridine(34) in tRNA = 5-carboxymethoxyuridine(34) in tRNA + S-adenosyl-L-homocysteine + H(+). Catalyzes carboxymethyl transfer from carboxy-S-adenosyl-L-methionine (Cx-SAM) to 5-hydroxyuridine (ho5U) to form 5-carboxymethoxyuridine (cmo5U) at position 34 in tRNAs. This is tRNA U34 carboxymethyltransferase from Pseudomonas fluorescens (strain Pf0-1).